Consider the following 949-residue polypeptide: MQNQGNKVLSAAMLDSADRYWLRLCDVWPEAKTALTAMQQQELTAVFGLSDYMGEQLCRHPEWIVQLFDGLLDDVVRSEFDAQLHSLIADLTQEELVKSALRRYRNLQMVRLAWRDFLNYTPVEESLLDLSALAEALVIAGRDWLYQEMCQQYGTPTSAEGNPQPLLILGMGKLGGRELNFSSDIDLIFTFPEHGETVGGRRTQANQQFFIRMGQRLVNLLDQVTVDGFVFRVDMRLRPYGESGPLVVSFSGLEDYYQEQGRDWERYAMVKARVLGPWSGYCDELHDLLRPFVYRRYIDFSAIESLRKMKQLIAQEVRRRQLTDNIKLGAGGIREVEFVVQSFQLIRGGREPALRQQSLFGAIDTLYSLGQLEYLAVDELKHSYIILRRVENLLQAIDDKQTQTLPNNELDWQRLCYPLDMADEVELRQKINQAMVTIHGHFNATVGGTDSHEHNDHWTALFWNVQQDEHANALLQEQQVDDAELWQLLSEWRQTVSKRSIGPRGRETLDKLMPKLLEELVTQTKPSQAFKPVAKVLDKILTRTTYLELLCENPGARQQLVSLCCASPWIARELANFPMLLDELIDPSQLYDITSIDDYPSELRQYLLRVPEDDMEQQMEALRQFKLSQQLKIAAADVTGVLPVMQVSDHLTFLAEAIIEQVVLQAWHQVASRHGIPAETSPSNMGFAVIGYGKLGGIELGYGSDLDLVFLHGHTGSGTTDGKRPIDNGHFYLKLAQRIVHLFATRTTSGELYEVDMRLRPSGASGLLVSEIEHFGAYLQQEAWTWEHQALVRSRFVFGDYSLAGRFSDLRAQVLKIERDKQVLAKAVKDMRIKMREHLLQVEPGQFDLKQSAGGIADIEFIAQYLVLANAHQYHELTIWSDNVRIFEVLAELELLPIMQAQHLTQTYCWLRDENHELTLQQLPGKLPIQSVLQKTDSVIEIYNEILAI.

The tract at residues M1–D450 is adenylyl removase. An adenylyl transferase region spans residues N455–I949.

It belongs to the GlnE family. Mg(2+) serves as cofactor.

It carries out the reaction [glutamine synthetase]-O(4)-(5'-adenylyl)-L-tyrosine + phosphate = [glutamine synthetase]-L-tyrosine + ADP. The enzyme catalyses [glutamine synthetase]-L-tyrosine + ATP = [glutamine synthetase]-O(4)-(5'-adenylyl)-L-tyrosine + diphosphate. Functionally, involved in the regulation of glutamine synthetase GlnA, a key enzyme in the process to assimilate ammonia. When cellular nitrogen levels are high, the C-terminal adenylyl transferase (AT) inactivates GlnA by covalent transfer of an adenylyl group from ATP to specific tyrosine residue of GlnA, thus reducing its activity. Conversely, when nitrogen levels are low, the N-terminal adenylyl removase (AR) activates GlnA by removing the adenylyl group by phosphorolysis, increasing its activity. The regulatory region of GlnE binds the signal transduction protein PII (GlnB) which indicates the nitrogen status of the cell. The polypeptide is Bifunctional glutamine synthetase adenylyltransferase/adenylyl-removing enzyme (Shewanella frigidimarina (strain NCIMB 400)).